The chain runs to 212 residues: Transcription antitermination protein NusB (212 aa).

Disordered regions lie at residues 1–34 (MSDE…SKSN) and 169–212 (EHDR…QAAG). Positions 178 to 212 (APAQPAAKADTATDAVADAATDAAAADDAADQAAG) are enriched in low complexity.

It belongs to the NusB family.

Involved in transcription antitermination. Required for transcription of ribosomal RNA (rRNA) genes. Binds specifically to the boxA antiterminator sequence of the ribosomal RNA (rrn) operons. This is Transcription antitermination protein NusB from Delftia acidovorans (strain DSM 14801 / SPH-1).